A 1827-amino-acid chain; its full sequence is Laminin subunit beta-4 (1827 aa).

A signal peptide spans 1-21; that stretch reads MLLRLELSALLLLLIAAPVRL. A Laminin N-terminal domain is found at 26 to 266; sequence VGNSCYPNLG…ALYEMVVRGS (241 aa). A glycan (N-linked (GlcNAc...) asparagine) is linked at asparagine 231. 19 cysteine pairs are disulfide-bonded: cysteine 267–cysteine 276, cysteine 269–cysteine 297, cysteine 299–cysteine 308, cysteine 311–cysteine 331, cysteine 334–cysteine 343, cysteine 336–cysteine 361, cysteine 364–cysteine 373, cysteine 376–cysteine 394, cysteine 397–cysteine 410, cysteine 399–cysteine 417, cysteine 419–cysteine 428, cysteine 431–cysteine 446, cysteine 449–cysteine 463, cysteine 451–cysteine 470, cysteine 472–cysteine 481, cysteine 484–cysteine 498, cysteine 501–cysteine 513, cysteine 503–cysteine 520, and cysteine 522–cysteine 531. Laminin EGF-like domains follow at residues 267-333, 334-396, 397-448, and 449-500; these read CFCN…VCKR, CNCH…ACIP, CDCD…GCQL, and CRCN…GCIP. In terms of domain architecture, Laminin EGF-like 5; truncated spans 501–544; it reads CDCDIGGALKTECSSVDGQCKCRPNMVGQKCNDPAPGYFLAPLD. The Laminin IV type B domain maps to 540–847; that stretch reads LAPLDFYIYE…LIGSMSAFIH (308 aa). Disulfide bonds link cysteine 853–cysteine 865, cysteine 855–cysteine 872, cysteine 874–cysteine 883, cysteine 886–cysteine 898, cysteine 901–cysteine 913, cysteine 903–cysteine 920, cysteine 922–cysteine 931, cysteine 934–cysteine 944, cysteine 947–cysteine 956, cysteine 949–cysteine 963, cysteine 966–cysteine 975, cysteine 978–cysteine 992, cysteine 995–cysteine 1011, cysteine 997–cysteine 1022, cysteine 1024–cysteine 1033, cysteine 1036–cysteine 1051, cysteine 1054–cysteine 1068, cysteine 1056–cysteine 1075, cysteine 1078–cysteine 1087, cysteine 1090–cysteine 1103, cysteine 1106–cysteine 1126, cysteine 1108–cysteine 1133, cysteine 1135–cysteine 1144, cysteine 1147–cysteine 1160, cysteine 1163–cysteine 1175, cysteine 1165–cysteine 1182, cysteine 1184–cysteine 1193, cysteine 1196–cysteine 1208, cysteine 1211–cysteine 1223, cysteine 1213–cysteine 1230, cysteine 1232–cysteine 1241, and cysteine 1244–cysteine 1255. Laminin EGF-like domains are found at residues 853-900, 901-946, 947-994, 995-1053, 1054-1105, 1106-1162, 1163-1210, and 1211-1257; these read CNCH…GCSP, CDCD…LCRR, CQCN…PCEP, CLCP…RCKE, CCCN…DCKE, CSCD…GCQP, CNCN…QCMF, and CDCN…ACEP. The N-linked (GlcNAc...) asparagine glycan is linked to asparagine 1001. Residues 1258–1449 form a domain II region; it reads CHACNHLWEK…LSAANINEEV (192 aa). Coiled coils occupy residues 1294-1335 and 1385-1449; these read ELQH…EIID and NKIK…NEEV. An N-linked (GlcNAc...) asparagine glycan is attached at asparagine 1329. The tract at residues 1450-1476 is domain alpha; that stretch reads CGAPGDAECEKAKCGGALCGKCGGPDC. A domain I region spans residues 1477-1827; it reads TGSLPISLNA…KVQRYNLCSP (351 aa). Residues asparagine 1485, asparagine 1496, asparagine 1513, asparagine 1533, asparagine 1599, asparagine 1629, asparagine 1644, asparagine 1672, asparagine 1686, asparagine 1702, asparagine 1726, asparagine 1745, asparagine 1750, and asparagine 1761 are each glycosylated (N-linked (GlcNAc...) asparagine). Coiled-coil stretches lie at residues 1485–1554 and 1584–1820; these read NASK…EKVK and DEIK…DKVQ.

Laminin is a complex glycoprotein, consisting of three different polypeptide chains (alpha, beta, gamma), which are bound to each other by disulfide bonds into a cross-shaped molecule comprising one long and three short arms with globules at each end.

Its subcellular location is the secreted. The protein localises to the extracellular space. The protein resides in the extracellular matrix. It localises to the basement membrane. Binding to cells via a high affinity receptor, laminin is thought to mediate the attachment, migration and organization of cells into tissues during embryonic development by interacting with other extracellular matrix components. Positively regulates apical-basal distribution of Muller glia cells in the retina. The sequence is that of Laminin subunit beta-4 (lamb4) from Danio rerio (Zebrafish).